A 134-amino-acid chain; its full sequence is Snaclec alboaggregin-A subunit alpha' (134 aa).

A C-type lectin domain is found at 1–134; it reads DFHCLPGWSA…NPFVCKFPPQ (134 aa). 3 disulfide bridges follow: Cys-4/Cys-15, Cys-32/Cys-129, and Cys-104/Cys-121.

The protein belongs to the snaclec family. In terms of assembly, heterotetramer of the subunits alpha, alpha', beta and beta'; disulfide-linked. As to expression, expressed by the venom gland.

Its subcellular location is the secreted. Potent platelet activator that aggregates platelets via both GPIbalpha (GP1BA) and GPVI (GP6). Induces a tyrosine phosphorylation profile in platelets that resembles this produced by collagen, involving the time dependent tyrosine phosphorylation of Fc receptor gamma chain (FCGR1A), phospholipase Cgamma2 (PLCG2), and LAT. This is Snaclec alboaggregin-A subunit alpha' from Trimeresurus albolabris (White-lipped pit viper).